We begin with the raw amino-acid sequence, 192 residues long: A-type ATP synthase subunit E (192 aa).

The protein belongs to the V-ATPase E subunit family. As to quaternary structure, has multiple subunits with at least A(3), B(3), C, D, E, F, H, I and proteolipid K(x).

The protein localises to the cell membrane. Component of the A-type ATP synthase that produces ATP from ADP in the presence of a proton gradient across the membrane. The polypeptide is A-type ATP synthase subunit E (Halorubrum lacusprofundi (strain ATCC 49239 / DSM 5036 / JCM 8891 / ACAM 34)).